The sequence spans 403 residues: Aloesone synthase (403 aa).

Residue C174 is part of the active site. Residues S281 and 318 to 321 (GGRA) contribute to the CoA site.

It belongs to the thiolase-like superfamily. Chalcone/stilbene synthases family. Homodimer.

It functions in the pathway secondary metabolite biosynthesis; flavonoid biosynthesis. Catalyzes the iterative condensations of 6, 7 or 8 molecules of malonyl-CoA to produce various aromatic polyketides. Produces the heptaketide aloesone, the aglycone of aloesin, from 7 molecules of malonyl-CoA as a major product. Also able to produce a hexaketide pyrone, a heptaketide 6-(2-acetyl-3,5-dihydroxybenzyl)-4-hydroxy-2-pyrone, a novel heptaketide 6-(2-(2,4-dihydroxy-6-methylphenyl)-2-oxoethyl)-4-hydroxy-2-pyrone and octaketides SEK4/SEK4b. In Aloe arborescens (Kidachi aloe), this protein is Aloesone synthase (PKS3).